Reading from the N-terminus, the 200-residue chain is Holliday junction branch migration complex subunit RuvA (200 aa).

The interval 1 to 63 (MYAYVKGKLT…EDAQLLYGFS (63 aa)) is domain I. A domain II region spans residues 64–142 (SEEEKDMFLS…ITEEDSDSLL (79 aa)). Positions 143 to 149 (QVDATST) are flexible linker. The interval 150-200 (VQDQFVQEAMLALEALGYSKRELAKVEKTLNKNKYDSVDEAVKAGLQLVVS) is domain III.

Belongs to the RuvA family. In terms of assembly, homotetramer. Forms an RuvA(8)-RuvB(12)-Holliday junction (HJ) complex. HJ DNA is sandwiched between 2 RuvA tetramers; dsDNA enters through RuvA and exits via RuvB. An RuvB hexamer assembles on each DNA strand where it exits the tetramer. Each RuvB hexamer is contacted by two RuvA subunits (via domain III) on 2 adjacent RuvB subunits; this complex drives branch migration. In the full resolvosome a probable DNA-RuvA(4)-RuvB(12)-RuvC(2) complex forms which resolves the HJ.

The protein resides in the cytoplasm. Functionally, the RuvA-RuvB-RuvC complex processes Holliday junction (HJ) DNA during genetic recombination and DNA repair, while the RuvA-RuvB complex plays an important role in the rescue of blocked DNA replication forks via replication fork reversal (RFR). RuvA specifically binds to HJ cruciform DNA, conferring on it an open structure. The RuvB hexamer acts as an ATP-dependent pump, pulling dsDNA into and through the RuvAB complex. HJ branch migration allows RuvC to scan DNA until it finds its consensus sequence, where it cleaves and resolves the cruciform DNA. This is Holliday junction branch migration complex subunit RuvA from Staphylococcus aureus (strain USA300).